Consider the following 129-residue polypeptide: uncharacterized protein (129 aa).

It is found in the cytoplasm. Its subcellular location is the cytosol. The protein resides in the nucleus. This is an uncharacterized protein from Schizosaccharomyces pombe (strain 972 / ATCC 24843) (Fission yeast).